Reading from the N-terminus, the 630-residue chain is Probable potassium transport system protein Kup (630 aa).

The next 12 helical transmembrane spans lie at 17–37 (LAIA…LYSL), 51–71 (PSAI…VVGI), 105–125 (ITGL…GDAV), 144–164 (PQLS…LFWI), 175–195 (LFGP…IYHI), 218–238 (VLLA…AEAL), 255–275 (YVLV…LLLL), 283–303 (PFFL…STVA), 344–364 (IYVP…VIGF), 374–394 (YGIA…VVMV), 402–422 (LLVA…FGAN), and 428–448 (QGGW…MTWY).

This sequence belongs to the HAK/KUP transporter (TC 2.A.72) family.

It is found in the cell inner membrane. The catalysed reaction is K(+)(in) + H(+)(in) = K(+)(out) + H(+)(out). Transport of potassium into the cell. Likely operates as a K(+):H(+) symporter. The polypeptide is Probable potassium transport system protein Kup (Burkholderia pseudomallei (strain 1710b)).